We begin with the raw amino-acid sequence, 476 residues long: Ankyrin repeat, SAM and basic leucine zipper domain-containing protein 1 (476 aa).

A phosphoserine mark is found at serine 18 and serine 21. 6 ANK repeats span residues 46-75 (EKNE…SIDS), 79-108 (YGWT…NASF), 111-145 (DKQT…DPNV), 149-178 (RLMT…EVNT), 182-211 (NGYT…DKML), and 215-244 (DGKT…PLEG). Positions 273–335 (SYAAFEDLEI…KILAALKELE (63 aa)) constitute an SAM domain.

As to quaternary structure, interacts with DDX4, PIWIL1, RANBP9 and TDRD1.

It is found in the cytoplasm. In terms of biological role, plays a central role during spermatogenesis by repressing transposable elements and preventing their mobilization, which is essential for the germline integrity. Acts via the piRNA metabolic process, which mediates the repression of transposable elements during meiosis by forming complexes composed of piRNAs and Piwi proteins and governs the methylation and subsequent repression of transposons. Its association with pi-bodies suggests a participation in the primary piRNAs metabolic process. Required prior to the pachytene stage to facilitate the production of multiple types of piRNAs, including those associated with repeats involved in the regulation of retrotransposons. May act by mediating protein-protein interactions during germ cell maturation. In Dasypus novemcinctus (Nine-banded armadillo), this protein is Ankyrin repeat, SAM and basic leucine zipper domain-containing protein 1 (ASZ1).